The following is an 881-amino-acid chain: MQDKYSPAEVEKSAHDHWQAIDAYKAVENAKDKNGKDKKKFYACSMLPYPSGKLHMGHVRNYTINDVMYRYLRMNGYNVLMPMGWDAFGMPAENAAMANNVPPAQWTYANIDYMKTQMASMGLAIDWSREMTACRPEYYKWNQWMFLKMLEKGIIYKKTGTVNWDPIDQTVLANEQVIDGRGWRSGALIEKREIPMYYARITDYAEELLDHVDNKLPGWPERVRIMQSNWIGKSTGVRFAFTHDIAEEGKLINDGKLWVFTTRADTIKGVTFCAVAPEHALATFAAKSNPELTDFIAECKLGSVIEADMATMEKKGMPTGLFVKHPLTGQLVEVWVGNYVLITYGDGAVMGVPAHDERDFAFAQKYVLPIHPVIDVPGKTFSDVAWHEWYGDKENGRCINSGKYDGLNYQQAVDAIAADLAELGLGEKKITYRLRDWGISRQRYWGTPIPIIHCKDCGDVPVPEKDLPVVLPEDCVPDGSGNPLNKHEKFLHVDCPQCGKPARRETDTMDTFVDSSWYYMRYCSPNSSDAMVDSRNDYWMPMDQYIGGIEHAVLHLLYARFWTKVMRDFGLVKFDEPFTNLLTQGMVLNETYFREDASGKKTWFNPADVQLQLDDKGRPVSAVLSSDGKAVEIGGTEKMSKSKNNGIDPQAQIDQYGADTARLFTMFASPPEQTLEWSGAGVEGANRFLRRVWAYGYNQAARVANASAFDFATLPEAHKALRRETHKILQQADNDYKRIQYNTVVSASMKMLNTLEAAKLDDSPASNAVISEGLSIFLRILNPVAPHITHALWQELGFAKDHGDILDAPWPQVDPAALEQAEIEMMIQVNGKLRGSIIVAKDADKASIEAAALANESVQKFIEGTPKKIIVVPGKLVNIVA.

The short motif at 48–58 (PYPSGKLHMGH) is the 'HIGH' region element. The short motif at 638 to 642 (KMSKS) is the 'KMSKS' region element. K641 serves as a coordination point for ATP.

The protein belongs to the class-I aminoacyl-tRNA synthetase family.

It localises to the cytoplasm. It catalyses the reaction tRNA(Leu) + L-leucine + ATP = L-leucyl-tRNA(Leu) + AMP + diphosphate. The polypeptide is Leucine--tRNA ligase (Janthinobacterium sp. (strain Marseille) (Minibacterium massiliensis)).